A 206-amino-acid polypeptide reads, in one-letter code: MSRWKAKHDKEHYYKLAKKQNYRSRASYKLKQLDKKYSLLKPDYNVVDLGAAPGGWSQVVAETIGEEGKGQIISVDLEYIKPIDHEAYTGVKGDFTTKETQDIIIELIDGKADVVLSDAAPKLTGIKDIDNFRAYDLSMAVIEIIDNILKNNGNLIMKAFQGEAYQEIIKNLKKKFRNVKTTKPNSSRKRSAEMYVIARGFRGSKK.

5 residues coordinate S-adenosyl-L-methionine: Gly54, Trp56, Asp76, Asp94, and Asp118. The active-site Proton acceptor is Lys158.

Belongs to the class I-like SAM-binding methyltransferase superfamily. RNA methyltransferase RlmE family.

The protein localises to the cytoplasm. It carries out the reaction uridine(2552) in 23S rRNA + S-adenosyl-L-methionine = 2'-O-methyluridine(2552) in 23S rRNA + S-adenosyl-L-homocysteine + H(+). Functionally, specifically methylates the uridine in position 2552 of 23S rRNA at the 2'-O position of the ribose in the fully assembled 50S ribosomal subunit. The polypeptide is Ribosomal RNA large subunit methyltransferase E (Methanosphaera stadtmanae (strain ATCC 43021 / DSM 3091 / JCM 11832 / MCB-3)).